Consider the following 356-residue polypeptide: Competence protein ComGA (356 aa).

Gly-144–Thr-151 provides a ligand contact to ATP.

This sequence belongs to the GSP E family.

It is found in the cell membrane. Functionally, required for uptake of DNA by competent cells. The chain is Competence protein ComGA (comGA) from Bacillus subtilis (strain 168).